We begin with the raw amino-acid sequence, 179 residues long: NADH dehydrogenase [ubiquinone] 1 beta subcomplex subunit 9 (179 aa).

Ala2 is subject to N-acetylalanine. Ser85 is subject to Phosphoserine. Residues 136–162 (EVKQLQEETPPGGPLTEALPPARKEGD) are disordered.

This sequence belongs to the complex I LYR family. As to quaternary structure, mammalian complex I is composed of 45 different subunits.

It is found in the mitochondrion inner membrane. In terms of biological role, accessory subunit of the mitochondrial membrane respiratory chain NADH dehydrogenase (Complex I), that is believed to be not involved in catalysis. Complex I functions in the transfer of electrons from NADH to the respiratory chain. The immediate electron acceptor for the enzyme is believed to be ubiquinone. The sequence is that of NADH dehydrogenase [ubiquinone] 1 beta subcomplex subunit 9 (NDUFB9) from Pongo abelii (Sumatran orangutan).